The primary structure comprises 694 residues: DNA polymerase eta (694 aa).

Residues 9-258 (VALVDMDCFF…MPIRKIRSLG (250 aa)) enclose the UmuC domain. Positions 13 and 14 each coordinate Mg(2+). Positions 13 and 14 each coordinate Mn(2+). Position 61 (Arg61) interacts with a 2'-deoxyribonucleoside 5'-triphosphate. Mg(2+) is bound by residues Asp115 and Glu116. Mn(2+) is bound by residues Asp115 and Glu116. Glu116 is a catalytic residue. Positions 565–598 (DSGPDDGAVKPVSSKAVSTEMNVAGDSPNVLDSP) are disordered. Residues 609–643 (ATEDQVLCEKCDSLVPVWDMPEHTDYHFALELQKS) form a UBZ3-type zinc finger. Zn(2+) contacts are provided by Cys616, Cys619, His631, and His635. Residues 651 to 694 (KPQAIPAVSPQGKRNPKSPSASSSKRLRPHGMQTLESFFKPLTH) are disordered. Residues Lys663, Lys667, and Lys675 each participate in a glycyl lysine isopeptide (Lys-Gly) (interchain with G-Cter in ubiquitin) cross-link. A PIP-box motif is present at residues 682–689 (MQTLESFF). A Glycyl lysine isopeptide (Lys-Gly) (interchain with G-Cter in ubiquitin) cross-link involves residue Lys690.

The protein belongs to the DNA polymerase type-Y family. Interacts with REV1. Interacts with monoubiquitinated PCNA, but not unmodified PCNA. Interacts with POLI; this interaction targets POLI to the replication machinery. Interacts with PALB2 and BRCA2; the interactions are direct and are required to sustain the recruitment of POLH at blocked replication forks and to stimulate POLH-dependent DNA synthesis on D loop substrates. Interacts (via C-terminus) with TRAIP. Interacts with ubiquitin. Interacts with POLDIP2. Requires Mg(2+) as cofactor. It depends on Mn(2+) as a cofactor. Post-translationally, monoubiquitinated by RCHY1/PIRH2. Ubiquitination depends on integrity of the UBZ3-type zinc finger domain and is enhanced by TRAIP. Ubiquitination inhibits the ability of PolH to interact with PCNA and to bypass UV-induced lesions. As to expression, ubiquitous.

Its subcellular location is the nucleus. It carries out the reaction DNA(n) + a 2'-deoxyribonucleoside 5'-triphosphate = DNA(n+1) + diphosphate. The enzyme in complex with the DNA substrate binds a third divalent metal cation. The binding of this third divalent cation, which is coordinated by water molecules and two oxygen atoms from DNA and dNTP, is essential for catalyzing the DNA synthesis. Its function is as follows. DNA polymerase specifically involved in the DNA repair by translesion synthesis (TLS). Due to low processivity on both damaged and normal DNA, cooperates with the heterotetrameric (REV3L, REV7, POLD2 and POLD3) POLZ complex for complete bypass of DNA lesions. Inserts one or 2 nucleotide(s) opposite the lesion, the primer is further extended by the tetrameric POLZ complex. In the case of 1,2-intrastrand d(GpG)-cisplatin cross-link, inserts dCTP opposite the 3' guanine. Particularly important for the repair of UV-induced pyrimidine dimers. Although inserts the correct base, may cause base transitions and transversions depending upon the context. May play a role in hypermutation at immunoglobulin genes. Forms a Schiff base with 5'-deoxyribose phosphate at abasic sites, but does not have any lyase activity, preventing the release of the 5'-deoxyribose phosphate (5'-dRP) residue. This covalent trapping of the enzyme by the 5'-dRP residue inhibits its DNA synthetic activity during base excision repair, thereby avoiding high incidence of mutagenesis. Targets POLI to replication foci. The protein is DNA polymerase eta (Polh) of Mus musculus (Mouse).